The primary structure comprises 311 residues: R2-like ligand binding oxidase (311 aa).

Glu68, Glu101, and His104 together coordinate Mn(2+). A cross-link (3-(O4'-tyrosyl)-valine (Val-Tyr)) is located at residues 71-162 (VTQDIQPFMA…AAQVRASVTY (92 aa)). Glu101 is a Fe cation binding site. Residues Glu167, Glu202, and His205 each coordinate Fe cation.

This sequence belongs to the ribonucleoside diphosphate reductase small chain family. R2-like ligand binding oxidase subfamily. Homodimer. Fe cation is required as a cofactor. Requires Mn(2+) as cofactor.

In terms of biological role, probable oxidase that might be involved in lipid metabolism. The chain is R2-like ligand binding oxidase from Mycobacterium avium (strain 104).